A 235-amino-acid polypeptide reads, in one-letter code: Eukaryotic translation initiation factor 4E-1 (235 aa).

Residues 1-36 (MVVEETIKATSTEDLSNTIANQNPRGRGGDEDEELE) form a disordered region. Positions 8–24 (KATSTEDLSNTIANQNP) are enriched in polar residues. 2 EIF4G-binding regions span residues 60-63 (HPLE) and 70-106 (FDNP…NNIH). Residues 78–83 (KQATWG), Lys110, and 128–129 (WE) contribute to the mRNA site. A disulfide bond links Cys133 and Cys171. The EIF4G-binding stretch occupies residues 154-163 (YTLLAMIGEQ). MRNA is bound by residues 178-183 (RSGQDK) and 223-227 (KKFDR).

The protein belongs to the eukaryotic initiation factor 4E family. As to quaternary structure, EIF4F is a multi-subunit complex, the composition of which varies with external and internal environmental conditions. It is composed of at least EIF4A, EIF4E and EIF4G. EIF4E is also known to interact with other partners. In higher plants two isoforms of EIF4F have been identified, named isoform EIF4F and isoform EIF(iso)4F. Isoform EIF4F has subunits p220 and p26, whereas isoform EIF(iso)4F has subunits p82 and p28. (Microbial infection) Interacts with potyvirus viral genome-linked protein (VPg); this interaction is possible in susceptible hosts but impaired in resistant plants. According to the redox status, the Cys-133-Cys-171 disulfide bridge may have a role in regulating protein function by affecting its ability to bind capped mRNA.

Its subcellular location is the nucleus. The protein localises to the cytoplasm. Its function is as follows. Component of the protein complex eIF4F, which is involved in the recognition of the mRNA cap, ATP-dependent unwinding of 5'-terminal secondary structure and recruitment of mRNA to the ribosome. Recognizes and binds the 7-methylguanosine-containing mRNA cap during an early step in the initiation of protein synthesis and facilitates ribosome binding by inducing the unwinding of the mRNAs secondary structures. Key component of recessive resistance to potyviruses. (Microbial infection) Susceptibility host factor required for viral infection by recruiting viral RNAs to the host ribosomal complex via an interaction with viral genome-linked protein (VPg). This chain is Eukaryotic translation initiation factor 4E-1, found in Citrullus lanatus (Watermelon).